A 456-amino-acid polypeptide reads, in one-letter code: Bifunctional protein GlmU (456 aa).

Residues 1–229 (MLNNAMSVVI…LSEVEGVNNR (229 aa)) form a pyrophosphorylase region. Residues 11-14 (LAAG), lysine 25, glutamine 76, 81-82 (GT), 103-105 (YGD), glycine 140, glutamate 154, asparagine 169, and asparagine 227 contribute to the UDP-N-acetyl-alpha-D-glucosamine site. Aspartate 105 contributes to the Mg(2+) binding site. Position 227 (asparagine 227) interacts with Mg(2+). The segment at 230–250 (LQLSRLERVYQFEQAEKLLLA) is linker. The interval 251–456 (GVMLRDPARF…EGWRRPVKKK (206 aa)) is N-acetyltransferase. The UDP-N-acetyl-alpha-D-glucosamine site is built by arginine 333 and lysine 351. Histidine 363 functions as the Proton acceptor in the catalytic mechanism. UDP-N-acetyl-alpha-D-glucosamine is bound by residues tyrosine 366 and asparagine 377. Residues alanine 380, 386–387 (NY), serine 405, alanine 423, and arginine 440 each bind acetyl-CoA.

In the N-terminal section; belongs to the N-acetylglucosamine-1-phosphate uridyltransferase family. The protein in the C-terminal section; belongs to the transferase hexapeptide repeat family. In terms of assembly, homotrimer. Mg(2+) serves as cofactor.

The protein resides in the cytoplasm. The enzyme catalyses alpha-D-glucosamine 1-phosphate + acetyl-CoA = N-acetyl-alpha-D-glucosamine 1-phosphate + CoA + H(+). It catalyses the reaction N-acetyl-alpha-D-glucosamine 1-phosphate + UTP + H(+) = UDP-N-acetyl-alpha-D-glucosamine + diphosphate. The protein operates within nucleotide-sugar biosynthesis; UDP-N-acetyl-alpha-D-glucosamine biosynthesis; N-acetyl-alpha-D-glucosamine 1-phosphate from alpha-D-glucosamine 6-phosphate (route II): step 2/2. It participates in nucleotide-sugar biosynthesis; UDP-N-acetyl-alpha-D-glucosamine biosynthesis; UDP-N-acetyl-alpha-D-glucosamine from N-acetyl-alpha-D-glucosamine 1-phosphate: step 1/1. It functions in the pathway bacterial outer membrane biogenesis; LPS lipid A biosynthesis. In terms of biological role, catalyzes the last two sequential reactions in the de novo biosynthetic pathway for UDP-N-acetylglucosamine (UDP-GlcNAc). The C-terminal domain catalyzes the transfer of acetyl group from acetyl coenzyme A to glucosamine-1-phosphate (GlcN-1-P) to produce N-acetylglucosamine-1-phosphate (GlcNAc-1-P), which is converted into UDP-GlcNAc by the transfer of uridine 5-monophosphate (from uridine 5-triphosphate), a reaction catalyzed by the N-terminal domain. The sequence is that of Bifunctional protein GlmU from Escherichia coli O7:K1 (strain IAI39 / ExPEC).